The sequence spans 53 residues: Light-harvesting protein B-800/850 alpha chain (53 aa).

Residues 1 to 14 (MNQGKIWTVVNPSV) are Cytoplasmic-facing. A helical transmembrane segment spans residues 15–35 (GLPLLLGSVTVIAILVHAAVL). Histidine 31 provides a ligand contact to a bacteriochlorophyll. At 36 to 53 (SHTTWFPAYWQGGLKKAA) the chain is on the periplasmic side.

It belongs to the antenna complex alpha subunit family. As to quaternary structure, the core complex is formed by different alpha and beta chains, binding bacteriochlorophyll molecules, and arranged most probably in tetrameric structures disposed around the reaction center. The non-pigmented gamma chains may constitute additional components.

It is found in the cell inner membrane. Its function is as follows. Antenna complexes are light-harvesting systems, which transfer the excitation energy to the reaction centers. This Rhodoblastus acidophilus (Rhodopseudomonas acidophila) protein is Light-harvesting protein B-800/850 alpha chain.